Consider the following 309-residue polypeptide: Methionyl-tRNA formyltransferase (309 aa).

110 to 113 (SLLP) lines the (6S)-5,6,7,8-tetrahydrofolate pocket. Residues 289–309 (KRMAATDWARGSRIEQGERLK) form a disordered region. The span at 298–309 (RGSRIEQGERLK) shows a compositional bias: basic and acidic residues.

Belongs to the Fmt family.

It catalyses the reaction L-methionyl-tRNA(fMet) + (6R)-10-formyltetrahydrofolate = N-formyl-L-methionyl-tRNA(fMet) + (6S)-5,6,7,8-tetrahydrofolate + H(+). Functionally, attaches a formyl group to the free amino group of methionyl-tRNA(fMet). The formyl group appears to play a dual role in the initiator identity of N-formylmethionyl-tRNA by promoting its recognition by IF2 and preventing the misappropriation of this tRNA by the elongation apparatus. This Saccharopolyspora erythraea (strain ATCC 11635 / DSM 40517 / JCM 4748 / NBRC 13426 / NCIMB 8594 / NRRL 2338) protein is Methionyl-tRNA formyltransferase.